The following is a 124-amino-acid chain: UPF0342 protein DSY2926 (124 aa).

This sequence belongs to the UPF0342 family.

This chain is UPF0342 protein DSY2926, found in Desulfitobacterium hafniense (strain Y51).